Reading from the N-terminus, the 315-residue chain is MYDWLNALPKAELHLHLEGSLEPELLFALAERNKIALPWNDVETLRGAYAFNNLQEFLDLYYQGADVLRTEQDFYDLTWAYLQRCKAQNVVHTEPFFDPQTHTDRGIAFEVVLNGISQALKDGREQLGISSGLILSFLRHLSEDEAHKTLDQALPFRDAFIAVGLDSSEMGHPPRKFQRVFDRARSEGFVAVAHAGEEGPPEYIWEALDLLKIKRIDHGVRAIEDERLMQRIIEEQIPLTVCPLSNTKLCVFDHMSQHNILDMLERGVKVTVNSDDPAYFGGYVTENFHALHTHLGMTEDQARRLAQNSLDARLI.

Residues histidine 14, histidine 16, and histidine 194 each contribute to the Zn(2+) site. The active-site Proton donor is glutamate 197. Aspartate 275 lines the Zn(2+) pocket. Aspartate 276 lines the substrate pocket.

The protein belongs to the metallo-dependent hydrolases superfamily. Adenosine and AMP deaminases family. Adenine deaminase type 2 subfamily. Zn(2+) is required as a cofactor.

It carries out the reaction adenine + H2O + H(+) = hypoxanthine + NH4(+). Functionally, catalyzes the hydrolytic deamination of adenine to hypoxanthine. Plays an important role in the purine salvage pathway and in nitrogen catabolism. The polypeptide is Adenine deaminase (Pseudomonas putida (strain GB-1)).